A 101-amino-acid polypeptide reads, in one-letter code: Small ribosomal subunit protein uS14 (101 aa).

The protein belongs to the universal ribosomal protein uS14 family. Part of the 30S ribosomal subunit. Contacts proteins S3 and S10.

Binds 16S rRNA, required for the assembly of 30S particles and may also be responsible for determining the conformation of the 16S rRNA at the A site. This Buchnera aphidicola subsp. Baizongia pistaciae (strain Bp) protein is Small ribosomal subunit protein uS14.